We begin with the raw amino-acid sequence, 194 residues long: Recombination protein RecR (194 aa).

A C4-type zinc finger spans residues 55–70 (CRECGNLAEGELCPIC). The Toprim domain maps to 78-171 (SLLAVVESVA…RVTRPAYGLP (94 aa)).

The protein belongs to the RecR family.

In terms of biological role, may play a role in DNA repair. It seems to be involved in an RecBC-independent recombinational process of DNA repair. It may act with RecF and RecO. In Thermus thermophilus (strain ATCC BAA-163 / DSM 7039 / HB27), this protein is Recombination protein RecR.